Here is a 100-residue protein sequence, read N- to C-terminus: Small ribosomal subunit protein uS14c (100 aa).

This sequence belongs to the universal ribosomal protein uS14 family. Part of the 30S ribosomal subunit.

It is found in the plastid. It localises to the chloroplast. Binds 16S rRNA, required for the assembly of 30S particles. This is Small ribosomal subunit protein uS14c from Liriodendron tulipifera (Tuliptree).